A 153-amino-acid chain; its full sequence is Neuromedin-S (153 aa).

The N-terminal stretch at 1–26 is a signal peptide; sequence MKHPLPHYSPILFIYCFCMLQIPSSG. 3 consecutive propeptides follow at residues 27–69, 70–105, and 106–108; these read ASPP…VYKR, FLFHYSRTRKPTHPVSAEFAPVHPLMRLAAKLASRR, and MKR. At Asn144 the chain carries Asparagine amide. Residues 147-153 constitute a propeptide that is removed on maturation; it reads YTDNNFQ.

This sequence belongs to the NmU family.

The protein localises to the secreted. Its function is as follows. Implicated in the regulation of circadian rhythms through autocrine and/or paracrine actions. This Mus musculus (Mouse) protein is Neuromedin-S (Nms).